We begin with the raw amino-acid sequence, 256 residues long: Protein LIKE COV 1 (256 aa).

A compositionally biased stretch (basic and acidic residues) spans 1 to 10 (MANRERDREL). The segment at 1-39 (MANRERDRELLIPVADFGDKDDGSSSKPSSSSSASSSHQ) is disordered. The Cytoplasmic segment spans residues 1–60 (MANRERDRELLIPVADFGDKDDGSSSKPSSSSSASSSHQSGHETLSLFIRGWASKKFMTG). Positions 25–39 (SSKPSSSSSASSSHQ) are enriched in low complexity. Residues 61–81 (CVILLPIAVTFYTTWWFIHFV) traverse the membrane as a helical segment. At 82–93 (DGFFSPIYALLG) the chain is on the extracellular side. A helical membrane pass occupies residues 94-114 (INIFGFGFLTSIAFIFLVGVF). At 115 to 256 (MSSWLGASVL…KPLASIGNES (142 aa)) the chain is on the cytoplasmic side.

Belongs to the plant COV1 protein family. As to expression, expressed at low levels in flowers, stems, roots and leaves.

Its subcellular location is the membrane. The polypeptide is Protein LIKE COV 1 (Arabidopsis thaliana (Mouse-ear cress)).